We begin with the raw amino-acid sequence, 369 residues long: Flagellar P-ring protein (369 aa).

Residues 1-22 (MFNVRQLIATTLLLSCAFAAQA) form the signal peptide.

The protein belongs to the FlgI family. As to quaternary structure, the basal body constitutes a major portion of the flagellar organelle and consists of four rings (L,P,S, and M) mounted on a central rod.

It is found in the periplasm. The protein resides in the bacterial flagellum basal body. Its function is as follows. Assembles around the rod to form the L-ring and probably protects the motor/basal body from shearing forces during rotation. The sequence is that of Flagellar P-ring protein from Pseudomonas putida (strain ATCC 47054 / DSM 6125 / CFBP 8728 / NCIMB 11950 / KT2440).